Reading from the N-terminus, the 197-residue chain is Probable proteasome subunit beta type-4 (197 aa).

This sequence belongs to the peptidase T1B family. In terms of assembly, the 26S proteasome consists of a 20S proteasome core and two 19S regulatory subunits. The 20S proteasome core is composed of 28 subunits that are arranged in four stacked rings, resulting in a barrel-shaped structure. The two end rings are each formed by seven alpha subunits, and the two central rings are each formed by seven beta subunits. The catalytic chamber with the active sites is on the inside of the barrel.

Its subcellular location is the cytoplasm. It is found in the nucleus. Functionally, non-catalytic component of the proteasome which degrades poly-ubiquitinated proteins in the cytoplasm and in the nucleus. It is essential for the regulated turnover of proteins and for the removal of misfolded proteins. The proteasome is a multicatalytic proteinase complex that is characterized by its ability to cleave peptides with Arg, Phe, Tyr, Leu, and Glu adjacent to the leaving group at neutral or slightly basic pH. It has an ATP-dependent proteolytic activity. In Encephalitozoon cuniculi (strain GB-M1) (Microsporidian parasite), this protein is Probable proteasome subunit beta type-4 (PRE1).